The chain runs to 467 residues: Light-independent protochlorophyllide reductase subunit N (467 aa).

Residues Cys-23, Cys-48, and Cys-108 each coordinate [4Fe-4S] cluster.

It belongs to the BchN/ChlN family. In terms of assembly, protochlorophyllide reductase is composed of three subunits; ChlL, ChlN and ChlB. Forms a heterotetramer of two ChlB and two ChlN subunits. Requires [4Fe-4S] cluster as cofactor.

It catalyses the reaction chlorophyllide a + oxidized 2[4Fe-4S]-[ferredoxin] + 2 ADP + 2 phosphate = protochlorophyllide a + reduced 2[4Fe-4S]-[ferredoxin] + 2 ATP + 2 H2O. It functions in the pathway porphyrin-containing compound metabolism; chlorophyll biosynthesis (light-independent). Its function is as follows. Component of the dark-operative protochlorophyllide reductase (DPOR) that uses Mg-ATP and reduced ferredoxin to reduce ring D of protochlorophyllide (Pchlide) to form chlorophyllide a (Chlide). This reaction is light-independent. The NB-protein (ChlN-ChlB) is the catalytic component of the complex. This Nostoc sp. (strain PCC 7120 / SAG 25.82 / UTEX 2576) protein is Light-independent protochlorophyllide reductase subunit N.